The sequence spans 197 residues: Glycerol-3-phosphate acyltransferase (197 aa).

A run of 5 helical transmembrane segments spans residues 7–27 (TLLP…LILT), 55–75 (GLAA…VLIV), 78–98 (VWPG…CFPV), 116–136 (LALA…VLFL), and 157–177 (VLGY…VLYL).

It belongs to the PlsY family. As to quaternary structure, probably interacts with PlsX.

Its subcellular location is the cell inner membrane. The enzyme catalyses an acyl phosphate + sn-glycerol 3-phosphate = a 1-acyl-sn-glycero-3-phosphate + phosphate. It participates in lipid metabolism; phospholipid metabolism. Its function is as follows. Catalyzes the transfer of an acyl group from acyl-phosphate (acyl-PO(4)) to glycerol-3-phosphate (G3P) to form lysophosphatidic acid (LPA). This enzyme utilizes acyl-phosphate as fatty acyl donor, but not acyl-CoA or acyl-ACP. In Novosphingobium aromaticivorans (strain ATCC 700278 / DSM 12444 / CCUG 56034 / CIP 105152 / NBRC 16084 / F199), this protein is Glycerol-3-phosphate acyltransferase.